The chain runs to 298 residues: Probable 2-(5''-triphosphoribosyl)-3'-dephosphocoenzyme-A synthase (298 aa).

This sequence belongs to the CitG/MdcB family.

It carries out the reaction 3'-dephospho-CoA + ATP = 2'-(5''-triphospho-alpha-D-ribosyl)-3'-dephospho-CoA + adenine. The protein is Probable 2-(5''-triphosphoribosyl)-3'-dephosphocoenzyme-A synthase of Salmonella arizonae (strain ATCC BAA-731 / CDC346-86 / RSK2980).